The sequence spans 185 residues: Threonylcarbamoyl-AMP synthase (185 aa).

Residues 1–185 form the YrdC-like domain; the sequence is MDNFEQVLNA…AKTSQILRQG (185 aa). A disordered region spans residues 163-185; it reads ETSGRDKPSEIRDAKTSQILRQG. A compositionally biased stretch (basic and acidic residues) spans 164-177; the sequence is TSGRDKPSEIRDAK.

The protein belongs to the SUA5 family. TsaC subfamily.

The protein localises to the cytoplasm. It catalyses the reaction L-threonine + hydrogencarbonate + ATP = L-threonylcarbamoyladenylate + diphosphate + H2O. Functionally, required for the formation of a threonylcarbamoyl group on adenosine at position 37 (t(6)A37) in tRNAs that read codons beginning with adenine. Catalyzes the conversion of L-threonine, HCO(3)(-)/CO(2) and ATP to give threonylcarbamoyl-AMP (TC-AMP) as the acyladenylate intermediate, with the release of diphosphate. The sequence is that of Threonylcarbamoyl-AMP synthase from Vibrio parahaemolyticus serotype O3:K6 (strain RIMD 2210633).